The following is a 313-amino-acid chain: Ankyrin repeat family A protein 2 (313 aa).

ANK repeat units follow at residues 148-180 (ANSLSVHQLAAQGEMLYLATRIEQENVINHTDE), 181-213 (EGFTPLMWAAAHGQIAVVEFLLQNGADPQLLGK), 214-246 (GRESALSLACSKGYTDIVKMLLDCGVDVNEYDW), 247-279 (NGGTPLLYAVHGNHVKCVKMLLESGADPTIETD), and 280-313 (SGYNSMDLAVALGYRSVQQVIESHLLKLLQNIKE).

Interacts (via ANK repeats) with CCDC8 (via PxLPxI/L motif); mediates the interaction with the 3M complex which is composed of CCDC8, CUL7 and OBSL1. Interacts (via ANK repeats) with HDAC4 (via PxLPxI/L motif). Interacts (via ANK repeats) with HDAC5 (via PxLPxI/L motif). Interacts (via ANK repeats) with LRP2/megalin (via PxLPxI/L motif). Interacts (via ANK repeats) with RFX7 (via PxLPxI/L motif). Interacts with AHRR. Interacts with NEK6.

The protein resides in the cytoplasm. The protein localises to the cytoskeleton. It is found in the membrane. May regulate the interaction between the 3M complex and the histone deacetylases HDAC4 and HDAC5. May also regulate LRP2/megalin. The polypeptide is Ankyrin repeat family A protein 2 (ANKRA2) (Homo sapiens (Human)).